The following is a 141-amino-acid chain: Hemoglobin subunit alpha (141 aa).

The Globin domain occupies Val1–Arg141. Ser3 is subject to Phosphoserine. Lys7 bears the N6-succinyllysine mark. Residue Thr8 is modified to Phosphothreonine. Residue Lys11 is modified to N6-succinyllysine. At Lys16 the chain carries N6-acetyllysine; alternate. At Lys16 the chain carries N6-succinyllysine; alternate. At Tyr24 the chain carries Phosphotyrosine. At Ser35 the chain carries Phosphoserine. At Lys40 the chain carries N6-succinyllysine. Ser49 bears the Phosphoserine mark. His58 is an O2 binding site. Heme b is bound at residue His87. Ser102 carries the post-translational modification Phosphoserine. Thr108 is subject to Phosphothreonine. Residues Ser124 and Ser131 each carry the phosphoserine modification. Residues Thr134 and Thr137 each carry the phosphothreonine modification. Ser138 is subject to Phosphoserine.

This sequence belongs to the globin family. In terms of assembly, heterotetramer of two alpha chains and two beta chains. Red blood cells.

In terms of biological role, involved in oxygen transport from the lung to the various peripheral tissues. Hemopressin acts as an antagonist peptide of the cannabinoid receptor CNR1. Hemopressin-binding efficiently blocks cannabinoid receptor CNR1 and subsequent signaling. The chain is Hemoglobin subunit alpha (HBA) from Taphozous georgianus (Sharp-nosed tomb bat).